The chain runs to 319 residues: Cytochrome c biogenesis protein CcsA (319 aa).

The next 8 membrane-spanning stretches (helical) occupy residues 9–29 (ILTH…LISL), 48–68 (TFFC…HFPL), 71–91 (LYES…VPYF), 98–118 (LSTI…SGLL), 143–163 (MILG…LLVI), 225–245 (IISL…VWAN), 258–275 (ETWA…LHTR), and 286–306 (AIVA…VNLL).

The protein belongs to the CcmF/CycK/Ccl1/NrfE/CcsA family. May interact with Ccs1.

It localises to the plastid. Its subcellular location is the chloroplast thylakoid membrane. Its function is as follows. Required during biogenesis of c-type cytochromes (cytochrome c6 and cytochrome f) at the step of heme attachment. The sequence is that of Cytochrome c biogenesis protein CcsA from Eucalyptus globulus subsp. globulus (Tasmanian blue gum).